We begin with the raw amino-acid sequence, 93 residues long: Defensin-like protein 210 (93 aa).

Positions 1–19 (MKTIILFLTLLVISSSCTS) are cleaved as a signal peptide. 3 disulfides stabilise this stretch: cysteine 63-cysteine 80, cysteine 66-cysteine 85, and cysteine 70-cysteine 87.

Belongs to the DEFL family.

It is found in the secreted. The sequence is that of Defensin-like protein 210 from Arabidopsis thaliana (Mouse-ear cress).